Here is a 426-residue protein sequence, read N- to C-terminus: Serine--tRNA ligase (426 aa).

233–235 lines the L-serine pocket; sequence TSE. 264–266 serves as a coordination point for ATP; that stretch reads RSE. Glutamate 287 contacts L-serine. Residue 351–354 coordinates ATP; it reads EISS. Residue serine 387 participates in L-serine binding.

This sequence belongs to the class-II aminoacyl-tRNA synthetase family. Type-1 seryl-tRNA synthetase subfamily. In terms of assembly, homodimer. The tRNA molecule binds across the dimer.

Its subcellular location is the cytoplasm. The enzyme catalyses tRNA(Ser) + L-serine + ATP = L-seryl-tRNA(Ser) + AMP + diphosphate + H(+). It catalyses the reaction tRNA(Sec) + L-serine + ATP = L-seryl-tRNA(Sec) + AMP + diphosphate + H(+). It functions in the pathway aminoacyl-tRNA biosynthesis; selenocysteinyl-tRNA(Sec) biosynthesis; L-seryl-tRNA(Sec) from L-serine and tRNA(Sec): step 1/1. Functionally, catalyzes the attachment of serine to tRNA(Ser). Is also able to aminoacylate tRNA(Sec) with serine, to form the misacylated tRNA L-seryl-tRNA(Sec), which will be further converted into selenocysteinyl-tRNA(Sec). This chain is Serine--tRNA ligase, found in Xylella fastidiosa (strain 9a5c).